The following is a 197-amino-acid chain: uncharacterized protein (197 aa).

Disordered stretches follow at residues methionine 1–valine 30 and proline 115–leucine 174. The segment covering lysine 21 to valine 30 has biased composition (low complexity). Over residues lysine 123–glutamate 137 the composition is skewed to acidic residues. A compositionally biased stretch (basic residues) spans lysine 157–serine 170.

This is an uncharacterized protein from Dictyostelium discoideum (Social amoeba).